Reading from the N-terminus, the 50-residue chain is Fungus-induced protein 3 (50 aa).

This is Fungus-induced protein 3 (fip-3) from Caenorhabditis elegans.